We begin with the raw amino-acid sequence, 563 residues long: Cystathionine gamma-synthase 1, chloroplastic (563 aa).

Residues 1–68 (MAVSSFQCPT…SRILRFPPNF (68 aa)) constitute a chloroplast transit peptide. Y226, R228, G256, M257, Y281, S376, and T378 together coordinate pyridoxal 5'-phosphate. N6-(pyridoxal phosphate)lysine is present on K379.

The protein belongs to the trans-sulfuration enzymes family. Pyridoxal 5'-phosphate serves as cofactor.

Its subcellular location is the plastid. The protein localises to the chloroplast. The enzyme catalyses O-phospho-L-homoserine + L-cysteine = L,L-cystathionine + phosphate. It carries out the reaction O-succinyl-L-homoserine + L-cysteine = L,L-cystathionine + succinate + H(+). It participates in amino-acid biosynthesis; L-methionine biosynthesis via de novo pathway; L-cystathionine from O-succinyl-L-homoserine: step 1/1. With respect to regulation, inhibited by propargylglycine. Catalyzes the first committed step of methionine (Met) biosynthesis. Catalyzes the formation of L-cystathionine from homoserine esters and L-cysteine, via a gamma-replacement reaction. Substrate preference for cystathionine synthesis is O-phospho-L-homoserine (OPH) &gt; O(4)-succinyl-L-homoserine (OSH) &gt;&gt; O-acetyl-L-homoserine (OAH). Is able, at extremely low rate, to catalyze a gamma-elimination of OPH in the absence of cysteine to produce inorganic phosphate (Pi), 2-oxobutanoate and ammonia. This Arabidopsis thaliana (Mouse-ear cress) protein is Cystathionine gamma-synthase 1, chloroplastic.